A 561-amino-acid chain; its full sequence is Sesquiterpene synthase 1 (561 aa).

Residues Asp-313, Asp-317, Asp-458, and Glu-466 each coordinate Mg(2+). Residues 313–317 (DDIYD) carry the DDXXD motif motif.

The protein belongs to the terpene synthase family. Tpsa subfamily. Requires Mn(2+) as cofactor. It depends on Mg(2+) as a cofactor.

The protein resides in the cytoplasm. It catalyses the reaction (2E,6E)-farnesyl diphosphate = (1S,8aR)-delta-cadinene + diphosphate. It functions in the pathway secondary metabolite biosynthesis; terpenoid biosynthesis. Functionally, involved in the biosynthesis of delta-cadinene. The polypeptide is Sesquiterpene synthase 1 (STS1) (Thapsia garganica (Deadly carrot)).